The primary structure comprises 433 residues: Enolase (433 aa).

Q167 contacts (2R)-2-phosphoglycerate. The active-site Proton donor is the E209. The Mg(2+) site is built by D246, E291, and D318. The (2R)-2-phosphoglycerate site is built by K343, R372, S373, and K394. K343 acts as the Proton acceptor in catalysis.

Belongs to the enolase family. In terms of assembly, component of the RNA degradosome, a multiprotein complex involved in RNA processing and mRNA degradation. Requires Mg(2+) as cofactor.

The protein localises to the cytoplasm. The protein resides in the secreted. It localises to the cell surface. It carries out the reaction (2R)-2-phosphoglycerate = phosphoenolpyruvate + H2O. The protein operates within carbohydrate degradation; glycolysis; pyruvate from D-glyceraldehyde 3-phosphate: step 4/5. Functionally, catalyzes the reversible conversion of 2-phosphoglycerate (2-PG) into phosphoenolpyruvate (PEP). It is essential for the degradation of carbohydrates via glycolysis. This is Enolase from Actinobacillus succinogenes (strain ATCC 55618 / DSM 22257 / CCUG 43843 / 130Z).